Here is a 337-residue protein sequence, read N- to C-terminus: 15-cis-phytoene synthase (337 aa).

This sequence belongs to the phytoene/squalene synthase family. Requires ATP as cofactor. It depends on Mn(2+) as a cofactor. Mg(2+) serves as cofactor.

The enzyme catalyses 2 (2E,6E,10E)-geranylgeranyl diphosphate = 15-cis-phytoene + 2 diphosphate. The protein operates within carotenoid biosynthesis; phytoene biosynthesis. Functionally, involved in the biosynthesis of carotenoids. Catalyzes the condensation of two molecules of geranylgeranyl diphosphate (GGPP) to give prephytoene diphosphate (PPPP) and the subsequent rearrangement of the cyclopropylcarbinyl intermediate to yield 15-cis-phytoene. The chain is 15-cis-phytoene synthase (crtB) from Synechocystis sp. (strain ATCC 27184 / PCC 6803 / Kazusa).